Here is a 124-residue protein sequence, read N- to C-terminus: MTHMHITSWALGLILFIIALVMYKKGNQKPAKIIHMILRLMFILIIITGGILTWDYIQGYGMPILGEALVKALAGLWLVAMMEMILTGKAKGKPTTAKWVQFSIALVLVIVLGFFRLPMGFLFI.

4 helical membrane-spanning segments follow: residues 3-23, 33-53, 62-82, and 104-124; these read HMHI…LVMY, IIHM…GILT, MPIL…VAMM, and IALV…FLFI.

This sequence belongs to the UPF0344 family.

Its subcellular location is the cell membrane. The protein is UPF0344 protein OB1184 of Oceanobacillus iheyensis (strain DSM 14371 / CIP 107618 / JCM 11309 / KCTC 3954 / HTE831).